The primary structure comprises 85 residues: U4-theraphotoxin-Hhn1u (85 aa).

A signal peptide spans 1 to 22 (MKMTLIAILTCAAVLVLHTTAA). A propeptide spanning residues 23–48 (EELEAESQLMEVGMPDTELEAVDEER) is cleaved from the precursor. Disulfide bonds link cysteine 52–cysteine 66, cysteine 56–cysteine 77, and cysteine 71–cysteine 82.

The protein belongs to the neurotoxin 12 (Hwtx-2) family. 02 (Hwtx-2) subfamily. In terms of tissue distribution, expressed by the venom gland.

The protein resides in the secreted. Postsynaptic neurotoxin. The chain is U4-theraphotoxin-Hhn1u from Cyriopagopus hainanus (Chinese bird spider).